Here is an 89-residue protein sequence, read N- to C-terminus: uncharacterized protein (89 aa).

One can recognise an HTH arsR-type domain in the interval 1–89 (MEKYEKAAEI…KEIIKLVDEL (89 aa)).

This is an uncharacterized protein from Methanocaldococcus jannaschii (strain ATCC 43067 / DSM 2661 / JAL-1 / JCM 10045 / NBRC 100440) (Methanococcus jannaschii).